The sequence spans 113 residues: Large ribosomal subunit protein uL22 (113 aa).

It belongs to the universal ribosomal protein uL22 family. As to quaternary structure, part of the 50S ribosomal subunit.

In terms of biological role, this protein binds specifically to 23S rRNA; its binding is stimulated by other ribosomal proteins, e.g. L4, L17, and L20. It is important during the early stages of 50S assembly. It makes multiple contacts with different domains of the 23S rRNA in the assembled 50S subunit and ribosome. Its function is as follows. The globular domain of the protein is located near the polypeptide exit tunnel on the outside of the subunit, while an extended beta-hairpin is found that lines the wall of the exit tunnel in the center of the 70S ribosome. The polypeptide is Large ribosomal subunit protein uL22 (Syntrophomonas wolfei subsp. wolfei (strain DSM 2245B / Goettingen)).